We begin with the raw amino-acid sequence, 129 residues long: Small ribosomal subunit protein uS11 (129 aa).

This sequence belongs to the universal ribosomal protein uS11 family. Part of the 30S ribosomal subunit. Interacts with proteins S7 and S18. Binds to IF-3.

Its function is as follows. Located on the platform of the 30S subunit, it bridges several disparate RNA helices of the 16S rRNA. Forms part of the Shine-Dalgarno cleft in the 70S ribosome. The chain is Small ribosomal subunit protein uS11 from Anoxybacillus flavithermus (strain DSM 21510 / WK1).